The chain runs to 273 residues: Nucleotide-binding protein TTHA0319 (273 aa).

ATP is bound at residue glycine 8–threonine 15. Position 57–60 (aspartate 57–alanine 60) interacts with GTP.

The protein belongs to the RapZ-like family.

Displays ATPase and GTPase activities. In Thermus thermophilus (strain ATCC 27634 / DSM 579 / HB8), this protein is Nucleotide-binding protein TTHA0319.